Here is a 248-residue protein sequence, read N- to C-terminus: Histone H1, gonadal (248 aa).

2 disordered regions span residues 1–46 (PGSP…PPVL) and 115–248 (AVAK…KARK). Over residues 9-39 (ASPRKSPRKSPKKSPRKASASPRRKAKRARA) the composition is skewed to basic residues. Residues 41–115 (THPPVLEMVQ…GASGRFRVGA (75 aa)) form the H15 domain. Residues 118–248 (KPKKAKKTSA…KRRSPKKARK (131 aa)) show a composition bias toward basic residues.

Belongs to the histone H1/H5 family. As to expression, sperm.

It localises to the nucleus. The protein resides in the chromosome. Its function is as follows. Histones H1 are necessary for the condensation of nucleosome chains into higher-order structures. The chain is Histone H1, gonadal from Parechinus angulosus (Angulate sea urchin).